We begin with the raw amino-acid sequence, 104 residues long: Photosystem II reaction center Psb28 protein (104 aa).

Belongs to the Psb28 family. Part of the photosystem II complex.

It is found in the cellular thylakoid membrane. This chain is Photosystem II reaction center Psb28 protein, found in Synechococcus sp. (strain JA-3-3Ab) (Cyanobacteria bacterium Yellowstone A-Prime).